The primary structure comprises 273 residues: NH(3)-dependent NAD(+) synthetase (273 aa).

Residue 47–54 (GISGGQDS) coordinates ATP. Aspartate 53 provides a ligand contact to Mg(2+). Residue arginine 139 coordinates deamido-NAD(+). Threonine 159 contacts ATP. Glutamate 164 is a binding site for Mg(2+). Positions 172 and 179 each coordinate deamido-NAD(+). Residues lysine 188 and threonine 210 each coordinate ATP. 259–260 (HK) is a binding site for deamido-NAD(+).

This sequence belongs to the NAD synthetase family. Homodimer.

It catalyses the reaction deamido-NAD(+) + NH4(+) + ATP = AMP + diphosphate + NAD(+) + H(+). It participates in cofactor biosynthesis; NAD(+) biosynthesis; NAD(+) from deamido-NAD(+) (ammonia route): step 1/1. Functionally, catalyzes the ATP-dependent amidation of deamido-NAD to form NAD. Uses ammonia as a nitrogen source. This Staphylococcus saprophyticus subsp. saprophyticus (strain ATCC 15305 / DSM 20229 / NCIMB 8711 / NCTC 7292 / S-41) protein is NH(3)-dependent NAD(+) synthetase.